The primary structure comprises 285 residues: Nucleotide-binding protein GSU1884 (285 aa).

ATP is bound at residue 8–15 (GLSGSGKS). 59–62 (DIRG) contributes to the GTP binding site.

The protein belongs to the RapZ-like family.

In terms of biological role, displays ATPase and GTPase activities. The protein is Nucleotide-binding protein GSU1884 of Geobacter sulfurreducens (strain ATCC 51573 / DSM 12127 / PCA).